Reading from the N-terminus, the 316-residue chain is CD-NTase-associated protein 12 (316 aa).

Residues 4–121 (RIFIGSSSEG…MLGITQTRYE (118 aa)) enclose the TIR domain. Residues 161–316 (STVIAISYFE…ECVEIIEPQP (156 aa)) form an STING domain region. Positions 172, 237, and 253 each coordinate 3',3'-c-di-GMP.

It in the C-terminal section; belongs to the bacterial STING family. In terms of assembly, forms homodimers; in the presence of c-di-GMP forms filaments with an ordered array of parallel-stacked subunits.

The catalysed reaction is NAD(+) + H2O = ADP-D-ribose + nicotinamide + H(+). With respect to regulation, NAD(+) hydrolase activity is strongly stimulated by c-di-GMP, weakly by 3'3'-cGAMP, very weakly by c-di-AMP but not at all by 2'3'-cGAMP. Self-association of TIR domains is required for NADase activity. Its function is as follows. Effector protein of a CBASS antiviral system with NAD(+) hydrolase activity. CBASS (cyclic oligonucleotide-based antiphage signaling system) provides immunity against bacteriophage. The CD-NTase protein synthesizes cyclic nucleotides in response to infection; these serve as specific second messenger signals. The signals activate a diverse range of effectors, leading to bacterial cell death and thus abortive phage infection. A type I-D(GG) CBASS system. Functionally, binds c-di-GMP (synthesized by the cognate CdnE encoded upstream in the same operon) but not c-di-AMP, 2'-3'-cGAMP, 3'-3'-cGAMP or cUMP-AMP (tested without the N-terminal TIR domain). Upon activation by c-di-GMP forms filaments which hydrolyze NAD(+); filament formation is required for enzyme activation. The polypeptide is CD-NTase-associated protein 12 (Lachnospiraceae bacterium (strain RUG226)).